The chain runs to 743 residues: MDDNEDELEEHQELVSDGSVEEEEEVEPDLGPVDSWESFNDRIDGLIFNERCDKSVKKLDERRLAILNRVRQQFREAPKGVAERCQAQKSPIDQRLELSSERLNELVRFGKELVTNVRVANERRELNRRLFEGAQKNQMHVKLQRESVETMARFENIKARWTELEETNEPMLLWDQIEEQKKRIAEIMARKDEMISACQAEVDRMNAKYEFDRERQAQDLCCLVERVDHQVETLKEAYKEHIQMLRQTIEEERQIFADNAVEKWRTFFDAMNANFDEKANLVRAREQFYARQTQQINESQEELTKSTRIRLEKECERLELELRRTRDNVLMNSEKLDYNYQVLQKRNEENVIINNQQKRRVARLHEAIGRTRRGLKNLYNTGKRNIARLSSDIYKLHSNINDMESKAHQARLNNREKFDRIWEINYKELNLLVDRVYHIDRIIHEQQLAMPWSSPVPPIPNINKAKKKRNNILEKFDMRIGRVPKNRVMPNSGVNCKPDIKELPPDSLRLMRNLIRKLSDRGGFLIEERLLKILEPYSEEEKCLVRIDNIFAALRIRHLRDVKELTKVFMPYTYCPNCQPQGLSPRKCAEVFMKDQKPNRLQGAAGGQPDEKEHRSTGDTFLPKSEVAAKRCHNHYLVMEPALCLHAMNLFTSKMHKKMYEHEPGSILNAVNLIQITDAEIRNFWRQFSACFPASKCKLWKTLEHGLNHYVEVLKMRVQYDAEVVFLRRQNEELRHLLQKFTV.

Composition is skewed to acidic residues over residues 1-10 and 19-28; these read MDDNEDELEE and SVEEEEEVEP. The tract at residues 1–34 is disordered; it reads MDDNEDELEEHQELVSDGSVEEEEEVEPDLGPVD. 2 coiled-coil regions span residues 175–332 and 395–416; these read DQIE…VLMN and KLHSNINDMESKAHQARLNNRE. Residues 599–620 are disordered; sequence NRLQGAAGGQPDEKEHRSTGDT. Residues 715 to 742 adopt a coiled-coil conformation; the sequence is KMRVQYDAEVVFLRRQNEELRHLLQKFT.

The protein belongs to the DRC1 family.

This Drosophila melanogaster (Fruit fly) protein is Dynein regulatory complex protein 1 homolog.